The chain runs to 473 residues: Photosystem II CP43 reaction center protein (473 aa).

Residues methionine 1 to glutamate 14 constitute a propeptide that is removed on maturation. Threonine 15 bears the N-acetylthreonine mark. Threonine 15 is subject to Phosphothreonine. The next 5 helical transmembrane spans lie at leucine 69–alanine 93, leucine 134–asparagine 155, lysine 178–threonine 200, lysine 255–serine 275, and tryptophan 291–alanine 312. [CaMn4O5] cluster is bound at residue glutamate 367. Residues arginine 447 to proline 471 traverse the membrane as a helical segment.

It belongs to the PsbB/PsbC family. PsbC subfamily. PSII is composed of 1 copy each of membrane proteins PsbA, PsbB, PsbC, PsbD, PsbE, PsbF, PsbH, PsbI, PsbJ, PsbK, PsbL, PsbM, PsbT, PsbX, PsbY, PsbZ, Psb30/Ycf12, at least 3 peripheral proteins of the oxygen-evolving complex and a large number of cofactors. It forms dimeric complexes. It depends on Binds multiple chlorophylls and provides some of the ligands for the Ca-4Mn-5O cluster of the oxygen-evolving complex. It may also provide a ligand for a Cl- that is required for oxygen evolution. PSII binds additional chlorophylls, carotenoids and specific lipids. as a cofactor.

It is found in the plastid. The protein localises to the chloroplast thylakoid membrane. One of the components of the core complex of photosystem II (PSII). It binds chlorophyll and helps catalyze the primary light-induced photochemical processes of PSII. PSII is a light-driven water:plastoquinone oxidoreductase, using light energy to abstract electrons from H(2)O, generating O(2) and a proton gradient subsequently used for ATP formation. This chain is Photosystem II CP43 reaction center protein, found in Solanum tuberosum (Potato).